We begin with the raw amino-acid sequence, 1423 residues long: Fructan beta-fructosidase (1423 aa).

The signal sequence occupies residues 1–39 (MEEETVCKNWFMRKSGKSWIFGCAVFFVLGLATALPVAA). The tract at residues 44-161 (QTTAADTAVT…TNLEDMSHDT (118 aa)) is disordered. Positions 69–126 (AVTETTQSEGTASKQLTTPAVADQTTEPTDNEPISSSDGASSPYQVTDTTEPQQTLTP) are enriched in polar residues. Residues 455 to 458 (WAND), glutamine 474, 513 to 514 (FS), 581 to 582 (RD), and aspartate 783 contribute to the substrate site. Aspartate 458 is an active-site residue. Residues 867 to 871 (ASVEV) are involved in binding of sugars with beta-(2,6) linkages or binding of molecular weight fructans. The region spanning 924 to 1002 (PVAMNTTTAK…SKENPSLSKT (79 aa)) is the BIG2 domain. Polar residues predominate over residues 1368-1385 (DVNSVQQTEPSVMSSSPK). A disordered region spans residues 1368–1394 (DVNSVQQTEPSVMSSSPKATLPDTGDH). The LPXTG sorting signal signature appears at 1388-1392 (LPDTG). At threonine 1391 the chain carries Pentaglycyl murein peptidoglycan amidated threonine. The propeptide at 1392 to 1423 (GDHKTDLSQLGVLAMIGSFLVEIAGYFKKRKD) is removed by sortase.

The protein belongs to the glycosyl hydrolase 32 family.

It localises to the secreted. It is found in the cell wall. It carries out the reaction Hydrolysis of terminal, non-reducing (2-&gt;1)- and (2-&gt;6)-linked beta-D-fructofuranose residues in fructans.. In terms of biological role, this protein is a fructanase enzyme which degrades levans and inulins to fructose and also cleaves sucrose into glucose and fructose and can therefore function as an extracellular invertase. This Streptococcus mutans serotype c (strain ATCC 700610 / UA159) protein is Fructan beta-fructosidase (fruA).